A 244-amino-acid polypeptide reads, in one-letter code: Transcriptional activator protein FnrA (244 aa).

The region spanning Lys-159–Ile-232 is the HTH crp-type domain. Positions Arg-192–Thr-211 form a DNA-binding region, H-T-H motif.

Functionally, transcriptional regulator of arginine deiminase. This is Transcriptional activator protein FnrA (fnrA) from Stutzerimonas stutzeri (Pseudomonas stutzeri).